A 3085-amino-acid polypeptide reads, in one-letter code: Genome polyprotein (3085 aa).

In terms of domain architecture, Peptidase S30 spans 170-313; the sequence is LVAKSDFDDL…AGDVGRTMHY (144 aa). Active-site for P1 proteinase activity residues include H224, E233, and S266. The Involved in interaction with stylet and aphid transmission signature appears at 365–368; that stretch reads KMAC. The Involved in virions binding and aphid transmission motif lies at 622-624; it reads PTK. One can recognise a Peptidase C6 domain in the interval 648-770; the sequence is MYIAKEGYCY…EGEMKWYRVG (123 aa). Catalysis depends on for helper component proteinase activity residues C656 and H729. Positions 1241 to 1393 constitute a Helicase ATP-binding domain; that stretch reads TICASSEQEF…TQHDVLIKIE (153 aa). 1254-1261 serves as a coordination point for ATP; the sequence is GAVGSGKS. The DESH box signature appears at 1343–1346; sequence DESH. Residues 1412–1571 enclose the Helicase C-terminal domain; the sequence is DVVQNGDNIL…NLPVMTHNVT (160 aa). Positions 1895–1904 match the Nuclear localization signal motif; that stretch reads ERGKRKGNNS. An O-(5'-phospho-RNA)-tyrosine modification is found at Y1919. The 220-residue stretch at 2047 to 2266 folds into the Peptidase C4 domain; it reads GKSIVKGLRN…VAWNGMTLRE (220 aa). Catalysis depends on for nuclear inclusion protein A activity residues H2092, D2127, and C2198. The region spanning 2535–2659 is the RdRp catalytic domain; it reads WIYCDADGSQ…AIYPSKEKFL (125 aa). The disordered stretch occupies residues 2801–2869; the sequence is DGPDIVTYQG…STAVPRLKQI (69 aa). Residues 2816-2831 show a composition bias toward low complexity; that stretch reads KSSQPQSSSPQVPQQV. Residues 2839–2855 show a composition bias toward basic and acidic residues; that stretch reads GRDKQSVIKHDSTKSKD. A Phosphothreonine modification is found at T3068.

It belongs to the potyviridae genome polyprotein family. As to quaternary structure, interacts with host eIF4E protein (via cap-binding region); this interaction mediates the translation of the VPg-viral RNA conjugates. Part of a complex that comprises VPg, RNA, host EIF4E and EIF4G; this interaction mediates the translation of the VPg-viral RNA conjugates. Post-translationally, VPg is uridylylated by the polymerase and is covalently attached to the 5'-end of the genomic RNA. This uridylylated form acts as a nucleotide-peptide primer for the polymerase. In terms of processing, potyviral RNA is expressed as two polyproteins which undergo post-translational proteolytic processing. Genome polyprotein is processed by NIa-pro, P1 and HC-pro proteinases resulting in the production of at least ten individual proteins. P3N-PIPO polyprotein is cleaved by P1 and HC-pro proteinases resulting in the production of three individual proteins. The P1 proteinase and the HC-pro cleave only their respective C-termini autocatalytically. 6K1 is essential for proper proteolytic separation of P3 from CI.

Its subcellular location is the host cytoplasmic vesicle. The protein localises to the host nucleus. The protein resides in the virion. The catalysed reaction is RNA(n) + a ribonucleoside 5'-triphosphate = RNA(n+1) + diphosphate. The enzyme catalyses Hydrolyzes glutaminyl bonds, and activity is further restricted by preferences for the amino acids in P6 - P1' that vary with the species of potyvirus, e.g. Glu-Xaa-Xaa-Tyr-Xaa-Gln-|-(Ser or Gly) for the enzyme from tobacco etch virus. The natural substrate is the viral polyprotein, but other proteins and oligopeptides containing the appropriate consensus sequence are also cleaved.. It catalyses the reaction Hydrolyzes a Gly-|-Gly bond at its own C-terminus, commonly in the sequence -Tyr-Xaa-Val-Gly-|-Gly, in the processing of the potyviral polyprotein.. Its function is as follows. Required for aphid transmission and also has proteolytic activity. Only cleaves a Gly-Gly dipeptide at its own C-terminus. Interacts with virions and aphid stylets. Acts as a suppressor of RNA-mediated gene silencing, also known as post-transcriptional gene silencing (PTGS), a mechanism of plant viral defense that limits the accumulation of viral RNAs. May have RNA-binding activity. Functionally, has helicase activity. It may be involved in replication. Indispensable for virus replication. Reduces the abundance of host transcripts related to jasmonic acid biosynthesis therefore altering the host defenses. In order to increase its own stability, decreases host protein degradation pathways. In terms of biological role, indispensable for virus replication. Its function is as follows. Mediates the cap-independent, EIF4E-dependent translation of viral genomic RNAs. Binds to the cap-binding site of host EIF4E and thus interferes with the host EIF4E-dependent mRNA export and translation. VPg-RNA directly binds EIF4E and is a template for transcription. Also forms trimeric complexes with EIF4E-EIF4G, which are templates for translation. Functionally, has RNA-binding and proteolytic activities. An RNA-dependent RNA polymerase that plays an essential role in the virus replication. In terms of biological role, involved in aphid transmission, cell-to-cell and systemis movement, encapsidation of the viral RNA and in the regulation of viral RNA amplification. The sequence is that of Genome polyprotein from Beet mosaic virus (BtMV).